A 295-amino-acid polypeptide reads, in one-letter code: Nucleotide-binding protein RD1_1380 (295 aa).

16-23 (GPSGAGRS) is an ATP binding site. 63–66 (DPRN) contributes to the GTP binding site.

The protein belongs to the RapZ-like family.

Its function is as follows. Displays ATPase and GTPase activities. This Roseobacter denitrificans (strain ATCC 33942 / OCh 114) (Erythrobacter sp. (strain OCh 114)) protein is Nucleotide-binding protein RD1_1380.